The primary structure comprises 338 residues: Lipoyl synthase (338 aa).

A disordered region spans residues 1–22 (MTTVQEAVPNLIPTQDVTPRPA). Positions 84, 89, 95, 110, 114, 117, and 324 each coordinate [4Fe-4S] cluster. In terms of domain architecture, Radical SAM core spans 96-313 (FSGGTATFMI…AEEGYKMGFK (218 aa)).

The protein belongs to the radical SAM superfamily. Lipoyl synthase family. [4Fe-4S] cluster serves as cofactor.

The protein resides in the cytoplasm. It carries out the reaction [[Fe-S] cluster scaffold protein carrying a second [4Fe-4S](2+) cluster] + N(6)-octanoyl-L-lysyl-[protein] + 2 oxidized [2Fe-2S]-[ferredoxin] + 2 S-adenosyl-L-methionine + 4 H(+) = [[Fe-S] cluster scaffold protein] + N(6)-[(R)-dihydrolipoyl]-L-lysyl-[protein] + 4 Fe(3+) + 2 hydrogen sulfide + 2 5'-deoxyadenosine + 2 L-methionine + 2 reduced [2Fe-2S]-[ferredoxin]. The protein operates within protein modification; protein lipoylation via endogenous pathway; protein N(6)-(lipoyl)lysine from octanoyl-[acyl-carrier-protein]: step 2/2. Catalyzes the radical-mediated insertion of two sulfur atoms into the C-6 and C-8 positions of the octanoyl moiety bound to the lipoyl domains of lipoate-dependent enzymes, thereby converting the octanoylated domains into lipoylated derivatives. The chain is Lipoyl synthase from Pseudomonas entomophila (strain L48).